Consider the following 591-residue polypeptide: Aspartate--tRNA ligase (591 aa).

Glutamate 171 is an L-aspartate binding site. The tract at residues 195–198 is aspartate; that stretch reads QLFK. An L-aspartate-binding site is contributed by arginine 217. ATP is bound by residues 217–219 and glutamine 226; that span reads RDE. Histidine 448 serves as a coordination point for L-aspartate. Glutamate 482 is a binding site for ATP. L-aspartate is bound at residue arginine 489. ATP is bound at residue 534-537; the sequence is GLDR.

Belongs to the class-II aminoacyl-tRNA synthetase family. Type 1 subfamily. Homodimer.

It localises to the cytoplasm. The enzyme catalyses tRNA(Asp) + L-aspartate + ATP = L-aspartyl-tRNA(Asp) + AMP + diphosphate. Functionally, catalyzes the attachment of L-aspartate to tRNA(Asp) in a two-step reaction: L-aspartate is first activated by ATP to form Asp-AMP and then transferred to the acceptor end of tRNA(Asp). This is Aspartate--tRNA ligase from Edwardsiella ictaluri (strain 93-146).